The chain runs to 780 residues: MKPQMFFRSVIQFYSKPSWMQRSYSSGNAEFNISGEVISILAKKKPIEPALEPLVPFLSKNIITSVIKDEVNRQLGFRFFIWASRRERLRSRESFGLVIDMLSEDNGCDLYWQTLEELKSGGVSVDSYCFCVLISAYAKMGMAEKAVESFGRMKEFDCRPDVFTYNVILRVMMREEVFFMLAFAVYNEMLKCNCSPNLYTFGILMDGLYKKGRTSDAQKMFDDMTGRGISPNRVTYTILISGLCQRGSADDARKLFYEMQTSGNYPDSVAHNALLDGFCKLGRMVEAFELLRLFEKDGFVLGLRGYSSLIDGLFRARRYTQAFELYANMLKKNIKPDIILYTILIQGLSKAGKIEDALKLLSSMPSKGISPDTYCYNAVIKALCGRGLLEEGRSLQLEMSETESFPDACTHTILICSMCRNGLVREAEEIFTEIEKSGCSPSVATFNALIDGLCKSGELKEARLLLHKMEVGRPASLFLRLSHSGNRSFDTMVESGSILKAYRDLAHFADTGSSPDIVSYNVLINGFCRAGDIDGALKLLNVLQLKGLSPDSVTYNTLINGLHRVGREEEAFKLFYAKDDFRHSPAVYRSLMTWSCRKRKVLVAFNLWMKYLKKISCLDDETANEIEQCFKEGETERALRRLIELDTRKDELTLGPYTIWLIGLCQSGRFHEALMVFSVLREKKILVTPPSCVKLIHGLCKREQLDAAIEVFLYTLDNNFKLMPRVCNYLLSSLLESTEKMEIVSQLTNRMERAGYNVDSMLRFEILKYHRHRKQVLIDL.

PPR repeat units follow at residues serine 91–valine 125, aspartate 126–proline 160, aspartate 161–proline 196, asparagine 197–proline 231, asparagine 232–proline 266, aspartate 267–leucine 301, glycine 302–proline 336, aspartate 337–proline 371, aspartate 372–proline 406, aspartate 407–proline 441, serine 442–serine 476, leucine 481–proline 515, aspartate 516–proline 550, aspartate 551–proline 585, threonine 653–valine 687, threonine 688–leucine 722, and methionine 723–valine 758.

The protein belongs to the PPR family. P subfamily.

This chain is Pentatricopeptide repeat-containing protein At1g79540, found in Arabidopsis thaliana (Mouse-ear cress).